We begin with the raw amino-acid sequence, 191 residues long: Protein UL140 (191 aa).

A helical transmembrane segment spans residues 28–48; the sequence is TLVVFGFIVTLLFFLFMLYFW.

Its subcellular location is the host membrane. The chain is Protein UL140 (UL140) from Homo sapiens (Human).